The sequence spans 189 residues: Endoribonuclease YbeY (189 aa).

Over residues 1–10 (MKERSSSPGT) the composition is skewed to polar residues. A disordered region spans residues 1 to 23 (MKERSSSPGTPDSGRRARPKPAK). The Zn(2+) site is built by histidine 141, histidine 145, and histidine 151.

The protein belongs to the endoribonuclease YbeY family. It depends on Zn(2+) as a cofactor.

The protein localises to the cytoplasm. Its function is as follows. Single strand-specific metallo-endoribonuclease involved in late-stage 70S ribosome quality control and in maturation of the 3' terminus of the 16S rRNA. The chain is Endoribonuclease YbeY from Nitrosospira multiformis (strain ATCC 25196 / NCIMB 11849 / C 71).